A 237-amino-acid chain; its full sequence is MILGDDECNINEHRFLVALYTSRTLFCGGTLINQEWVLTAAHCNMEDIQIKLGMHSKKVPNEDEQKRVPKEKFFCLSSKNYTLWDKDIMLIRLDSPVKNSAHIAPLSLPSSPPSVGSVCRTIGWGRISSTKETYPDVPHCVNINLLEYEMCRAPYPEFELPATSRTLCAGILEGGKDTCVGDSGGPLICNGQFQGIASWGDDPCAQPHKPAAYTKVFDHLDWIENIIAGNTDASCPP.

M1 is a propeptide. The Peptidase S1 domain maps to 2–228; the sequence is ILGDDECNIN…HLDWIENIIA (227 aa). Cysteines 27 and 43 form a disulfide. The active-site Charge relay system is H42. A glycan (N-linked (GlcNAc...) asparagine) is linked at N80. D87 (charge relay system) is an active-site residue. Intrachain disulfides connect C119/C189, C151/C168, and C179/C204. The active-site Charge relay system is S183.

This sequence belongs to the peptidase S1 family. Snake venom subfamily. As to expression, expressed by the venom gland.

It localises to the secreted. The hydrolysis of TAMe (tosyl-arginine methyl ester) substrate is activated by Ca(2+), Fe(3+), Mg(2+) and Zn(2+), and inhibited by EDTA, PMSF and DTT. Its function is as follows. Thrombin-like enzyme that shows fibrinogenolytic activity against bovine fibrinogen alpha and beta chains, but not gamma chain. Hydrolyzes fibrin. Enhances ADP-induced human platelet aggregation. Has arginine esterase activity for TAMe (tosyl-arginine methyl ester) substrate. Reduces thrombin-induced thrombosis. Does not have hemorrhagic activity. Reduces the motility of human liver cancer HepG2 cells in a wound-healing assay. This Gloydius halys (Chinese water mocassin) protein is Thrombin-like enzyme agkihpin-1.